The sequence spans 135 residues: Ribosome-binding factor A (135 aa).

This sequence belongs to the RbfA family. Monomer. Binds 30S ribosomal subunits, but not 50S ribosomal subunits or 70S ribosomes.

The protein localises to the cytoplasm. Its function is as follows. One of several proteins that assist in the late maturation steps of the functional core of the 30S ribosomal subunit. Associates with free 30S ribosomal subunits (but not with 30S subunits that are part of 70S ribosomes or polysomes). Required for efficient processing of 16S rRNA. May interact with the 5'-terminal helix region of 16S rRNA. This chain is Ribosome-binding factor A, found in Rhodopseudomonas palustris (strain HaA2).